An 876-amino-acid polypeptide reads, in one-letter code: Alanine--tRNA ligase (876 aa).

Lys-74 bears the N6-acetyllysine mark. Residues His-564, His-568, Cys-666, and His-670 each coordinate Zn(2+).

Belongs to the class-II aminoacyl-tRNA synthetase family. In terms of assembly, homotetramer. Zn(2+) serves as cofactor.

Its subcellular location is the cytoplasm. It catalyses the reaction tRNA(Ala) + L-alanine + ATP = L-alanyl-tRNA(Ala) + AMP + diphosphate. Catalyzes the attachment of alanine to tRNA(Ala) in a two-step reaction: alanine is first activated by ATP to form Ala-AMP and then transferred to the acceptor end of tRNA(Ala). Also edits incorrectly charged Ser-tRNA(Ala) and Gly-tRNA(Ala) via its editing domain. This Shigella sonnei (strain Ss046) protein is Alanine--tRNA ligase.